The chain runs to 82 residues: ATP synthase subunit c, chloroplastic (82 aa).

2 helical membrane-spanning segments follow: residues 3–23 (PIVA…AAIG) and 57–77 (FAFM…LLFA).

The protein belongs to the ATPase C chain family. In terms of assembly, F-type ATPases have 2 components, F(1) - the catalytic core - and F(0) - the membrane proton channel. F(1) has five subunits: alpha(3), beta(3), gamma(1), delta(1), epsilon(1). F(0) has four main subunits: a(1), b(1), b'(1) and c(10-14). The alpha and beta chains form an alternating ring which encloses part of the gamma chain. F(1) is attached to F(0) by a central stalk formed by the gamma and epsilon chains, while a peripheral stalk is formed by the delta, b and b' chains.

Its subcellular location is the plastid. The protein resides in the chloroplast thylakoid membrane. In terms of biological role, f(1)F(0) ATP synthase produces ATP from ADP in the presence of a proton or sodium gradient. F-type ATPases consist of two structural domains, F(1) containing the extramembraneous catalytic core and F(0) containing the membrane proton channel, linked together by a central stalk and a peripheral stalk. During catalysis, ATP synthesis in the catalytic domain of F(1) is coupled via a rotary mechanism of the central stalk subunits to proton translocation. Functionally, key component of the F(0) channel; it plays a direct role in translocation across the membrane. A homomeric c-ring of between 10-14 subunits forms the central stalk rotor element with the F(1) delta and epsilon subunits. This is ATP synthase subunit c, chloroplastic from Tetradesmus obliquus (Green alga).